Consider the following 231-residue polypeptide: Deoxyribose-phosphate aldolase (231 aa).

Residue aspartate 97 is the Proton donor/acceptor of the active site. Residue lysine 162 is the Schiff-base intermediate with acetaldehyde of the active site. Lysine 191 acts as the Proton donor/acceptor in catalysis.

It belongs to the DeoC/FbaB aldolase family. DeoC type 1 subfamily.

The protein resides in the cytoplasm. The enzyme catalyses 2-deoxy-D-ribose 5-phosphate = D-glyceraldehyde 3-phosphate + acetaldehyde. The protein operates within carbohydrate degradation; 2-deoxy-D-ribose 1-phosphate degradation; D-glyceraldehyde 3-phosphate and acetaldehyde from 2-deoxy-alpha-D-ribose 1-phosphate: step 2/2. Its function is as follows. Catalyzes a reversible aldol reaction between acetaldehyde and D-glyceraldehyde 3-phosphate to generate 2-deoxy-D-ribose 5-phosphate. The polypeptide is Deoxyribose-phosphate aldolase (Caldanaerobacter subterraneus subsp. tengcongensis (strain DSM 15242 / JCM 11007 / NBRC 100824 / MB4) (Thermoanaerobacter tengcongensis)).